The following is a 71-amino-acid chain: ATP synthase subunit c (71 aa).

2 helical membrane-spanning segments follow: residues 5–25 (GAAIVAGLAAVGGAIAVAIIV) and 47–67 (FIGVPLAEAVPIIAIVMGFLI).

The protein belongs to the ATPase C chain family. In terms of assembly, F-type ATPases have 2 components, F(1) - the catalytic core - and F(0) - the membrane proton channel. F(1) has five subunits: alpha(3), beta(3), gamma(1), delta(1), epsilon(1). F(0) has three main subunits: a(1), b(2) and c(10-14). The alpha and beta chains form an alternating ring which encloses part of the gamma chain. F(1) is attached to F(0) by a central stalk formed by the gamma and epsilon chains, while a peripheral stalk is formed by the delta and b chains.

It localises to the cell membrane. Functionally, f(1)F(0) ATP synthase produces ATP from ADP in the presence of a proton or sodium gradient. F-type ATPases consist of two structural domains, F(1) containing the extramembraneous catalytic core and F(0) containing the membrane proton channel, linked together by a central stalk and a peripheral stalk. During catalysis, ATP synthesis in the catalytic domain of F(1) is coupled via a rotary mechanism of the central stalk subunits to proton translocation. Its function is as follows. Key component of the F(0) channel; it plays a direct role in translocation across the membrane. A homomeric c-ring of between 10-14 subunits forms the central stalk rotor element with the F(1) delta and epsilon subunits. The chain is ATP synthase subunit c from Alkalihalobacillus alcalophilus (Bacillus alcalophilus).